The following is a 151-amino-acid chain: UPAR/Ly6 domain-containing protein rtv (151 aa).

Positions 1–19 (MQFTSLLLAVIFLISLVSI) are cleaved as a signal peptide. Topologically, residues 20-125 (DGLLRRCYQC…QGDLCNGARS (106 aa)) are extracellular. Intrachain disulfides connect Cys26–Cys65, Cys29–Cys38, Cys60–Cys88, Cys100–Cys113, and Cys115–Cys120. The N-linked (GlcNAc...) asparagine glycan is linked to Asn45. Residue Asn121 is the site of GPI-anchor amidated asparagine attachment. A propeptide spans 122–151 (GARSWSSAPQMILITMLPLLGSWLLQRMRN) (removed in mature form). The helical transmembrane segment at 126-146 (WSSAPQMILITMLPLLGSWLL) threads the bilayer. Topologically, residues 147 to 151 (QRMRN) are cytoplasmic.

Belongs to the quiver family.

Its subcellular location is the cell membrane. Its function is as follows. Required for chitin fiber assembly and organization involved in cuticle formation and tracheal development. This is UPAR/Ly6 domain-containing protein rtv from Drosophila melanogaster (Fruit fly).